Here is a 1112-residue protein sequence, read N- to C-terminus: DNA-directed RNA polymerase subunit beta (1112 aa).

Positions 1087-1112 (VGGRRTPNRPTYENIGGPREMEFSED) are disordered.

It belongs to the RNA polymerase beta chain family. As to quaternary structure, in cyanobacteria the RNAP catalytic core is composed of 2 alpha, 1 beta, 1 beta', 1 gamma and 1 omega subunit. When a sigma factor is associated with the core the holoenzyme is formed, which can initiate transcription.

It catalyses the reaction RNA(n) + a ribonucleoside 5'-triphosphate = RNA(n+1) + diphosphate. DNA-dependent RNA polymerase catalyzes the transcription of DNA into RNA using the four ribonucleoside triphosphates as substrates. The polypeptide is DNA-directed RNA polymerase subunit beta (Gloeobacter violaceus (strain ATCC 29082 / PCC 7421)).